The sequence spans 275 residues: Large ribosomal subunit protein uL2 (275 aa).

The interval 224 to 275 (AMNPVDHPHGGGEAKAGQGNPHPVTPWGVPTKGYKTRKNKRTQQFIVRDRRG) is disordered.

The protein belongs to the universal ribosomal protein uL2 family. Part of the 50S ribosomal subunit. Forms a bridge to the 30S subunit in the 70S ribosome.

In terms of biological role, one of the primary rRNA binding proteins. Required for association of the 30S and 50S subunits to form the 70S ribosome, for tRNA binding and peptide bond formation. It has been suggested to have peptidyltransferase activity; this is somewhat controversial. Makes several contacts with the 16S rRNA in the 70S ribosome. The polypeptide is Large ribosomal subunit protein uL2 (Xanthomonas axonopodis pv. citri (strain 306)).